We begin with the raw amino-acid sequence, 622 residues long: Signal recognition particle subunit SRP68 (622 aa).

The interval 576-622 (RDATPKKAAKGSSAAAASSKTSNQEEEEQQGLTGMLSGWKKSFWGNK) is disordered. Residues 585–595 (KGSSAAAASSK) are compositionally biased toward low complexity.

It belongs to the SRP68 family. Heterodimer with srpa-72. Srpa-68/srpa-72 heterodimer formation is stabilized by the presence of 7SL RNA. Component of a signal recognition particle (SRP) complex that consists of a 7SL RNA molecule of 300 nucleotides and six protein subunits: srpa-72, srpa-68, SRP54, F37F2.2/SRP19, F25G6.8/SRP14 and ZK512.4/SRP9. Within the SRP complex, interacts (via C-terminus) with srpa-72 (via N-terminus).

It is found in the cytoplasm. The protein resides in the nucleus. It localises to the nucleolus. Its subcellular location is the endoplasmic reticulum. Component of the signal recognition particle (SRP) complex, a ribonucleoprotein complex that mediates the cotranslational targeting of secretory and membrane proteins to the endoplasmic reticulum (ER). The SRP complex interacts with the signal sequence in nascent secretory and membrane proteins and directs them to the membrane of the ER. The SRP complex targets the ribosome-nascent chain complex to the SRP receptor (SR), which is anchored in the ER, where SR compaction and GTPase rearrangement drive cotranslational protein translocation into the ER. Binds the signal recognition particle RNA (7SL RNA), srpa-72 binds to this complex subsequently. The SRP complex possibly participates in the elongation arrest function. This is Signal recognition particle subunit SRP68 from Caenorhabditis elegans.